The sequence spans 330 residues: Ketol-acid reductoisomerase (NADP(+)) (330 aa).

The KARI N-terminal Rossmann domain occupies 1 to 181 (MKVFYDSDFK…GLSRAGVIQT (181 aa)). Residues 24 to 27 (YGSQ), R47, S52, and 82 to 85 (DELQ) contribute to the NADP(+) site. Residue H107 is part of the active site. G133 is a binding site for NADP(+). The region spanning 182-327 (TFKEETETDL…AKLRKMCGLE (146 aa)) is the KARI C-terminal knotted domain. Residues D190, E194, E226, and E230 each coordinate Mg(2+). S251 provides a ligand contact to substrate.

The protein belongs to the ketol-acid reductoisomerase family. It depends on Mg(2+) as a cofactor.

It catalyses the reaction (2R)-2,3-dihydroxy-3-methylbutanoate + NADP(+) = (2S)-2-acetolactate + NADPH + H(+). It carries out the reaction (2R,3R)-2,3-dihydroxy-3-methylpentanoate + NADP(+) = (S)-2-ethyl-2-hydroxy-3-oxobutanoate + NADPH + H(+). It functions in the pathway amino-acid biosynthesis; L-isoleucine biosynthesis; L-isoleucine from 2-oxobutanoate: step 2/4. It participates in amino-acid biosynthesis; L-valine biosynthesis; L-valine from pyruvate: step 2/4. Involved in the biosynthesis of branched-chain amino acids (BCAA). Catalyzes an alkyl-migration followed by a ketol-acid reduction of (S)-2-acetolactate (S2AL) to yield (R)-2,3-dihydroxy-isovalerate. In the isomerase reaction, S2AL is rearranged via a Mg-dependent methyl migration to produce 3-hydroxy-3-methyl-2-ketobutyrate (HMKB). In the reductase reaction, this 2-ketoacid undergoes a metal-dependent reduction by NADPH to yield (R)-2,3-dihydroxy-isovalerate. This is Ketol-acid reductoisomerase (NADP(+)) from Methanococcus maripaludis (strain C5 / ATCC BAA-1333).